Here is a 267-residue protein sequence, read N- to C-terminus: MSIPTPYEDLLRDVMANGTHKSDRTGTGTRSVFGRQLRFDLAESFPLITTKRVHFKSVAVELLWFLRGDSNVKWMQDQGVSIWDEWADADGELGPVYGVQWRSWPTPDGGHIDQISELMTNLAANPDSRRHIVSAWNVSELKDMALPPCHAFFQFYVADGKLSCQLYQRSADTFLGVPFNIASYALLTRMVAQQLGLEPGEFVWTGGDVHVYDNHVDQVAEQLSREPYEYPQLKILRKPDSIFDYTLDDFEVVDYRHHPTIKAPIAV.

R24 is a dUMP binding site. (6R)-5,10-methylene-5,6,7,8-tetrahydrofolate is bound at residue H54. A dUMP-binding site is contributed by 129–130 (RR). The active-site Nucleophile is the C149. DUMP-binding positions include 169–172 (RSAD), N180, and 210–212 (HVY). (6R)-5,10-methylene-5,6,7,8-tetrahydrofolate is bound at residue D172. A266 is a (6R)-5,10-methylene-5,6,7,8-tetrahydrofolate binding site.

Belongs to the thymidylate synthase family. Bacterial-type ThyA subfamily. As to quaternary structure, homodimer.

It is found in the cytoplasm. The catalysed reaction is dUMP + (6R)-5,10-methylene-5,6,7,8-tetrahydrofolate = 7,8-dihydrofolate + dTMP. It participates in pyrimidine metabolism; dTTP biosynthesis. In terms of biological role, catalyzes the reductive methylation of 2'-deoxyuridine-5'-monophosphate (dUMP) to 2'-deoxythymidine-5'-monophosphate (dTMP) while utilizing 5,10-methylenetetrahydrofolate (mTHF) as the methyl donor and reductant in the reaction, yielding dihydrofolate (DHF) as a by-product. This enzymatic reaction provides an intracellular de novo source of dTMP, an essential precursor for DNA biosynthesis. This is Thymidylate synthase from Paenarthrobacter aurescens (strain TC1).